A 236-amino-acid polypeptide reads, in one-letter code: Phosphoribosylaminoimidazole-succinocarboxamide synthase (236 aa).

It belongs to the SAICAR synthetase family.

The enzyme catalyses 5-amino-1-(5-phospho-D-ribosyl)imidazole-4-carboxylate + L-aspartate + ATP = (2S)-2-[5-amino-1-(5-phospho-beta-D-ribosyl)imidazole-4-carboxamido]succinate + ADP + phosphate + 2 H(+). Its pathway is purine metabolism; IMP biosynthesis via de novo pathway; 5-amino-1-(5-phospho-D-ribosyl)imidazole-4-carboxamide from 5-amino-1-(5-phospho-D-ribosyl)imidazole-4-carboxylate: step 1/2. This Lactococcus lactis subsp. cremoris (Streptococcus cremoris) protein is Phosphoribosylaminoimidazole-succinocarboxamide synthase (purC).